A 374-amino-acid chain; its full sequence is tRNA (guanine(26)-N(2))-dimethyltransferase (374 aa).

In terms of domain architecture, Trm1 methyltransferase spans 4-371 (IEIREGKASL…KEIDEIVNCI (368 aa)). Residues Arg-44, Arg-69, Asp-87, Asp-113, and Ala-114 each contribute to the S-adenosyl-L-methionine site. Residues Cys-244, Cys-247, Cys-261, and Cys-264 each coordinate Zn(2+).

It belongs to the class I-like SAM-binding methyltransferase superfamily. Trm1 family.

It catalyses the reaction guanosine(26) in tRNA + 2 S-adenosyl-L-methionine = N(2)-dimethylguanosine(26) in tRNA + 2 S-adenosyl-L-homocysteine + 2 H(+). In terms of biological role, dimethylates a single guanine residue at position 26 of a number of tRNAs using S-adenosyl-L-methionine as donor of the methyl groups. The sequence is that of tRNA (guanine(26)-N(2))-dimethyltransferase from Sulfurisphaera tokodaii (strain DSM 16993 / JCM 10545 / NBRC 100140 / 7) (Sulfolobus tokodaii).